A 232-amino-acid polypeptide reads, in one-letter code: Large ribosomal subunit protein uL1 (232 aa).

It belongs to the universal ribosomal protein uL1 family. As to quaternary structure, part of the 50S ribosomal subunit.

Binds directly to 23S rRNA. The L1 stalk is quite mobile in the ribosome, and is involved in E site tRNA release. Functionally, protein L1 is also a translational repressor protein, it controls the translation of the L11 operon by binding to its mRNA. In Coxiella burnetii (strain CbuK_Q154) (Coxiella burnetii (strain Q154)), this protein is Large ribosomal subunit protein uL1.